Consider the following 354-residue polypeptide: GRAM domain-containing protein 2A (354 aa).

Positions methionine 1–valine 29 are enriched in polar residues. Residues methionine 1 to leucine 46 are disordered. The span at cysteine 31–glutamate 40 shows a compositional bias: basic and acidic residues. A GRAM domain is found at glutamine 72–lysine 139. A helical membrane pass occupies residues leucine 312–phenylalanine 332.

It localises to the endoplasmic reticulum membrane. It is found in the cell membrane. Its function is as follows. Participates in the organization of endoplasmic reticulum-plasma membrane contact sites (EPCS) with pleiotropic functions including STIM1 recruitment and calcium homeostasis. Constitutive tether that co-localize with ESYT2/3 tethers at endoplasmic reticulum-plasma membrane contact sites in a phosphatidylinositol lipid-dependent manner. Pre-marks the subset of phosphtidylinositol 4,5-biphosphate (PI(4,5)P2)-enriched EPCS destined for the store operated calcium entry pathway (SOCE). The chain is GRAM domain-containing protein 2A from Homo sapiens (Human).